A 1786-amino-acid chain; its full sequence is Transcription initiation factor TFIID subunit 1b (1786 aa).

2 disordered regions span residues 54–83 (EDYDEQGGQEKEHVPVEKSFDSEEREPVVL) and 350–372 (FGSRGSQSTNESTNKSRHHPQLL). The span at 61 to 83 (GQEKEHVPVEKSFDSEEREPVVL) shows a compositional bias: basic and acidic residues. The span at 352–362 (SRGSQSTNEST) shows a compositional bias: polar residues. Residues 574 to 650 (MTIVVKSLGG…VHLLRTKVHL (77 aa)) enclose the Ubiquitin-like domain. A compositionally biased stretch (basic residues) spans 1303–1313 (MKTNKHCPKYR). 3 disordered regions span residues 1303–1382 (MKTN…DVAA), 1397–1471 (LKIS…KDQA), and 1596–1634 (SEREEEKRRKAKQKKKLQRGILENYPPRRNDGISSESGQ). Residues 1357–1377 (TKISVNEATKVGDSTSKTPGS) show a composition bias toward polar residues. Basic residues predominate over residues 1397–1407 (LKISSKAKPKA). Residues 1433 to 1464 (HNPSVSGQLLPSTETDQAASSRYTTSVPQPSL) show a composition bias toward polar residues. 2 coiled-coil regions span residues 1591-1620 (REVIRSEREEEKRRKAKQKKKLQRGILENY) and 1752-1786 (LADELLVKCDRLLDEYRDELKEAEKGIVDSSDSLR). A compositionally biased stretch (basic residues) spans 1604-1613 (RKAKQKKKLQ). Residues 1656 to 1774 (KRRKKGQVGL…DEYRDELKEA (119 aa)) form the Bromo domain.

Belongs to the TAF1 family. In terms of assembly, component of the TFIID complex. TFIID is composed of TATA binding protein (TBP) and a number of TBP-associated factors (TAFs) whose MWs range from 14-217 kDa. As to expression, expressed in roots, shoots, leaves and inflorescences.

It localises to the nucleus. In terms of biological role, TAFs are components of the transcription factor IID (TFIID) complex that is essential for mediating regulation of RNA polymerase transcription. Core scaffold of the TFIID complex. Acts as a histone acetyltransferase involved in the light regulation of growth and gene expression. Required for H3K9, H3K27, and H4K12 acetylation on the target promoters. The protein is Transcription initiation factor TFIID subunit 1b (TAF1B) of Arabidopsis thaliana (Mouse-ear cress).